Consider the following 133-residue polypeptide: Large-conductance mechanosensitive channel (133 aa).

Transmembrane regions (helical) follow at residues 19–39 (IDLAVGVVIGGAFGKIVTSLV) and 79–99 (IQSVVDFIIISFSIFLFVKLI).

The protein belongs to the MscL family. In terms of assembly, homopentamer.

The protein resides in the cell membrane. Channel that opens in response to stretch forces in the membrane lipid bilayer. May participate in the regulation of osmotic pressure changes within the cell. In Clostridium tetani (strain Massachusetts / E88), this protein is Large-conductance mechanosensitive channel.